A 185-amino-acid chain; its full sequence is Pyruvate/ketoisovalerate oxidoreductases common subunit gamma (185 aa).

In terms of assembly, heterotetramer of one alpha, one beta, one delta and one gamma chain.

It catalyses the reaction 2 oxidized [2Fe-2S]-[ferredoxin] + pyruvate + CoA = 2 reduced [2Fe-2S]-[ferredoxin] + acetyl-CoA + CO2 + H(+). It carries out the reaction 3-methyl-2-oxobutanoate + 2 oxidized [2Fe-2S]-[ferredoxin] + CoA = 2-methylpropanoyl-CoA + 2 reduced [2Fe-2S]-[ferredoxin] + CO2 + H(+). The protein is Pyruvate/ketoisovalerate oxidoreductases common subunit gamma (porG) of Pyrococcus furiosus (strain ATCC 43587 / DSM 3638 / JCM 8422 / Vc1).